Consider the following 304-residue polypeptide: MSVNGENKVSGGDSSSSDRPVRVYADGIFDLFHFGHARAIEQAKKSFPNTYLLVGCCNDEITNKFKGKTVMTESERYESLRHCKWVDEVIPDAPWVLTTEFLDKHKIDYVAHDALPYADTSGAGNDVYEFVKSIGKFKETKRTEGISTSDIIMRIVKDYNQYVLRNLDRGYSREELGVSFEEKRLRVNMRLKKLQEKVKEQQEKIQTVAKTAGMHHDEWLENADRWVAGFLEMFEEGCHKMGTAIRDGIQQRLMRQESEENRRLLQNGLTISKDNDDEQMSDDNEFAEEDCVNVSNKGIETVKK.

Residues 28–36 (IFDLFHFGH) and Lys-66 contribute to the CTP site. Substrate contacts are provided by Lys-66 and Trp-95. Residues 112–113 (HD), Tyr-117, and 142–146 (RTEGI) contribute to the CTP site. The disordered stretch occupies residues 266–292 (QNGLTISKDNDDEQMSDDNEFAEEDCV). Over residues 275 to 291 (NDDEQMSDDNEFAEEDC) the composition is skewed to acidic residues.

This sequence belongs to the cytidylyltransferase family.

It carries out the reaction phosphocholine + CTP + H(+) = CDP-choline + diphosphate. Its pathway is phospholipid metabolism; phosphatidylcholine biosynthesis; phosphatidylcholine from phosphocholine: step 1/2. Plays an important role in the biosynthesis of the phospholipid phosphatidylcholine. Catalyzes the formation of CDP-choline. The polypeptide is Choline-phosphate cytidylyltransferase 2 (Arabidopsis thaliana (Mouse-ear cress)).